Consider the following 231-residue polypeptide: Ribose-5-phosphate isomerase A (231 aa).

Residues 40-43 (TGST), 93-96 (DGAD), and 106-109 (KGGG) each bind substrate. Residue glutamate 115 is the Proton acceptor of the active site. Residue lysine 133 participates in substrate binding.

The protein belongs to the ribose 5-phosphate isomerase family. Homodimer.

The catalysed reaction is aldehydo-D-ribose 5-phosphate = D-ribulose 5-phosphate. It functions in the pathway carbohydrate degradation; pentose phosphate pathway; D-ribose 5-phosphate from D-ribulose 5-phosphate (non-oxidative stage): step 1/1. Its function is as follows. Catalyzes the reversible conversion of ribose-5-phosphate to ribulose 5-phosphate. This Escherichia coli O1:K1 / APEC protein is Ribose-5-phosphate isomerase A.